The chain runs to 213 residues: MDTIWDISPPIAPATPVWPGDTPVGIERVWRIEAGSPVNVARVTLSPHTGAHADAPLHYDADGAPIGAVPLDAYLGRCRVIHCIGARSAVTPGHVRAALDGAPPRVLLRTYGQAPQHAWDSAFCAVAPETIDLLAAHGVRLVGIDTPSLDPQESKTMDAHRRIRAHRMAILEGLVLDEIAAGDYELIALPLKFATLDASPVRAVLRALPAAPR.

Residue tryptophan 18 coordinates substrate. Residues histidine 48, histidine 52, and aspartate 54 each coordinate Zn(2+). Residue histidine 58 is the Proton donor/acceptor of the active site. Zn(2+) contacts are provided by histidine 160 and glutamate 172.

The protein belongs to the Cyclase 1 superfamily. KynB family. Homodimer. Requires Zn(2+) as cofactor.

The enzyme catalyses N-formyl-L-kynurenine + H2O = L-kynurenine + formate + H(+). The protein operates within amino-acid degradation; L-tryptophan degradation via kynurenine pathway; L-kynurenine from L-tryptophan: step 2/2. Its function is as follows. Catalyzes the hydrolysis of N-formyl-L-kynurenine to L-kynurenine, the second step in the kynurenine pathway of tryptophan degradation. The protein is Kynurenine formamidase of Burkholderia pseudomallei (strain 668).